Here is a 321-residue protein sequence, read N- to C-terminus: Glucokinase (321 aa).

8–13 (GDVGGT) contacts ATP.

Belongs to the bacterial glucokinase family.

The protein localises to the cytoplasm. It carries out the reaction D-glucose + ATP = D-glucose 6-phosphate + ADP + H(+). In Salmonella schwarzengrund (strain CVM19633), this protein is Glucokinase.